The sequence spans 216 residues: Adenylate kinase (216 aa).

ATP is bound at residue 10–15; sequence GAGKGT. Residues 30 to 59 form an NMP region; that stretch reads STGDIFRYNIKQGTELGKKAKSYMDQGLLV. AMP-binding positions include Thr31, Arg36, 57–59, 85–88, and Gln92; these read LLV and GFPR. An LID region spans residues 126–163; it reads GRRICRECGATFHVQYNPSTKGALCDQCGGELYQRDDD. Arg127 contributes to the ATP binding site. 2 residues coordinate Zn(2+): Cys130 and Cys133. ATP is bound at residue 136–137; that stretch reads TF. 2 residues coordinate Zn(2+): Cys150 and Cys153. Positions 160 and 171 each coordinate AMP. Lys199 serves as a coordination point for ATP.

The protein belongs to the adenylate kinase family. Monomer.

It localises to the cytoplasm. It carries out the reaction AMP + ATP = 2 ADP. It functions in the pathway purine metabolism; AMP biosynthesis via salvage pathway; AMP from ADP: step 1/1. Its function is as follows. Catalyzes the reversible transfer of the terminal phosphate group between ATP and AMP. Plays an important role in cellular energy homeostasis and in adenine nucleotide metabolism. The chain is Adenylate kinase from Alkaliphilus oremlandii (strain OhILAs) (Clostridium oremlandii (strain OhILAs)).